A 465-amino-acid polypeptide reads, in one-letter code: Na(+)-translocating NADH-quinone reductase subunit A (465 aa).

The protein belongs to the NqrA family. In terms of assembly, composed of six subunits; NqrA, NqrB, NqrC, NqrD, NqrE and NqrF.

It catalyses the reaction a ubiquinone + n Na(+)(in) + NADH + H(+) = a ubiquinol + n Na(+)(out) + NAD(+). In terms of biological role, NQR complex catalyzes the reduction of ubiquinone-1 to ubiquinol by two successive reactions, coupled with the transport of Na(+) ions from the cytoplasm to the periplasm. NqrA to NqrE are probably involved in the second step, the conversion of ubisemiquinone to ubiquinol. The chain is Na(+)-translocating NADH-quinone reductase subunit A from Chlamydia trachomatis serovar L2b (strain UCH-1/proctitis).